Here is a 229-residue protein sequence, read N- to C-terminus: Nisin biosynthesis regulatory protein NisR (229 aa).

The Response regulatory domain maps to 4–117; sequence KILIVDDDQE…QLVAKVEANI (114 aa). Asp-53 carries the post-translational modification 4-aspartylphosphate. Residues 132–229 constitute a DNA-binding region (ompR/PhoB-type); the sequence is EIRRDLGPIT…VRGLGYQWHG (98 aa).

In terms of processing, phosphorylated by NisK.

Its function is as follows. Member of the two-component regulatory system NisK/NisR involved in the regulation of the biosynthesis of lantibiotic nisin. NisR may function as a regulatory protein. This chain is Nisin biosynthesis regulatory protein NisR (nisR), found in Lactococcus lactis subsp. lactis (Streptococcus lactis).